Here is a 142-residue protein sequence, read N- to C-terminus: Centromere protein S (142 aa).

Residues 107–142 (LKGKAKKKRKPEDESRSSRESMAEELDGAEELQSES) form a disordered region. The segment covering 116 to 128 (KPEDESRSSRESM) has biased composition (basic and acidic residues). Residues 129–142 (AEELDGAEELQSES) show a composition bias toward acidic residues.

It belongs to the TAF9 family. CENP-S/MHF1 subfamily. In terms of assembly, heterodimer with CENPX, sometimes called MHF; this interaction stabilizes both partners. MHF heterodimers can assemble to form tetrameric structures. MHF also coassemble with CENPT-CENPW heterodimers at centromeres to form the tetrameric CENP-T-W-S-X complex. Forms a discrete complex with FANCM and CENPX, called FANCM-MHF; this interaction, probably mediated by direct binding between CENPS and FANCM, leads to synergistic activation of double-stranded DNA binding and strongly stimulates FANCM-mediated DNA remodeling. Recruited by FANCM to the Fanconi anemia (FA) core complex, which consists of CENPS, CENPX, FANCA, FANCB, FANCC, FANCE, FANCF, FANCG, FANCL, FANCM, FAAP24 and FAAP100. The FA core complex associates with Bloom syndrome (BLM) complex, which consists of at least BLM, DNA topoisomerase 3-alpha (TOP3A), RMI1/BLAP75, RPA1/RPA70 and RPA2/RPA32. The super complex between FA and BLM is called BRAFT. Component of the CENPA-CAD complex, composed of CENPI, CENPK, CENPL, CENPO, CENPP, CENPQ, CENPR and CENPS. The CENPA-CAD complex is probably recruited on centromeres by the CENPA-NAC complex, at least composed of CENPA, CENPC, CENPH, CENPM, CENPN, CENPT and CENPU.

It localises to the nucleus. Its subcellular location is the chromosome. The protein localises to the centromere. It is found in the kinetochore. In terms of biological role, DNA-binding component of the Fanconi anemia (FA) core complex. Required for the normal activation of the FA pathway, leading to monoubiquitination of the FANCI-FANCD2 complex in response to DNA damage, cellular resistance to DNA cross-linking drugs, and prevention of chromosomal breakage. In complex with CENPX (MHF heterodimer), crucial cofactor for FANCM in both binding and ATP-dependent remodeling of DNA. Stabilizes FANCM. In complex with CENPX and FANCM (but not other FANC proteins), rapidly recruited to blocked forks and promotes gene conversion at blocked replication forks. In complex with CENPT, CENPW and CENPX (CENP-T-W-S-X heterotetramer), involved in the formation of a functional kinetochore outer plate, which is essential for kinetochore-microtubule attachment and faithful mitotic progression. As a component of MHF and CENP-T-W-S-X complexes, binds DNA and bends it to form a nucleosome-like structure. DNA-binding function is fulfilled in the presence of CENPX, with the following preference for DNA substates: Holliday junction &gt; double-stranded &gt; splay arm &gt; single-stranded. Does not bind DNA on its own. The sequence is that of Centromere protein S (Cenps) from Mus musculus (Mouse).